The chain runs to 264 residues: 14-3-3-like protein GF14-A (264 aa).

The disordered stretch occupies residues 245–264 (DMQDDGGDEMRDATKPEDEH). The segment covering 252–264 (DEMRDATKPEDEH) has biased composition (basic and acidic residues).

Belongs to the 14-3-3 family.

Is associated with a DNA binding complex that binds to the G box, a well-characterized cis-acting DNA regulatory element found in plant genes. This is 14-3-3-like protein GF14-A (GF14A) from Oryza sativa subsp. japonica (Rice).